Reading from the N-terminus, the 149-residue chain is Potassium binding protein Kbp (149 aa).

The region spanning 23-91 is the BON domain; sequence DKDDQAKKVQ…SVDDQVKTAT (69 aa). A LysM domain is found at 97–146; that stretch reads QFYTVKSGDTLSAISKQVYGNANLYNKIFEANKPMLKSPDKIYPGQVLRI.

Its subcellular location is the cytoplasm. In terms of biological role, highly specific potassium binding protein that is required for normal growth in the presence of high levels of external K(+). May act as a sensor of cytoplasmic K(+) concentration. This Escherichia coli O6:H1 (strain CFT073 / ATCC 700928 / UPEC) protein is Potassium binding protein Kbp.